A 190-amino-acid chain; its full sequence is MDTEYEQVNKPWNELYKEATLGNKLTVNVGMEDVEVPLLPSNFLTKVRVSLSGGYITVRRVRIKIIPLVSRKAGVSGKLYLRDISDTTGRKLHCTELLDLGKEIRLTMQHLDFSVSARSDVPIVFGFEDLVSPYLEGRELFSVSLRWQFGLSAQCYSLPPAKWKVMYQEDALKALKPSKIKKASKTDSSV.

Belongs to the tombusvirus/aureusvirus movement protein p22 family.

The protein resides in the host membrane. In terms of biological role, transports viral genome to neighboring plant cells directly through plasmosdesmata, without any budding. The movement protein allows efficient cell to cell propagation, by bypassing the host cell wall barrier. This is Movement protein from Cucumber necrosis virus (CNV).